The primary structure comprises 356 residues: Neurogenic differentiation factor 1 (356 aa).

The tract at residues 1–94 (MTKSYSESGL…GPKKKKMTKA (94 aa)) is disordered. The segment covering 58–78 (EEEDEDEDLEEEEEEEEEDDD) has biased composition (acidic residues). Basic residues predominate over residues 81–93 (PKRRGPKKKKMTK). A Nuclear localization signal motif is present at residues 87 to 93 (KKKKMTK). A bHLH domain is found at 101–153 (LRRMKANARERNRMHGLNAALDNLRKVVPCYSKTQKLSKIETLRLAKNYIWAL). Phosphoserine is present on residues Ser162, Ser259, Ser266, and Ser274. Ser335 carries the phosphoserine; by CaMK2 modification.

As to quaternary structure, efficient DNA-binding requires dimerization with another bHLH protein. Heterodimer with TCF3/E47; the heterodimer is inhibited in presence of ID2, but not NR0B2, to E-box element. Interacts with EP300; the interaction is inhibited by NR0B2. Interacts with RREB1. Interacts with ATOH8. In terms of processing, phosphorylated. In islet cells, phosphorylated on Ser-274 upon glucose stimulation; which may be required for nuclear localization. In activated neurons, phosphorylated on Ser-335; which promotes dendritic growth. Phosphorylated by MAPK1; phosphorylation regulates heterodimerization and DNA-binding activities. Phosphorylation on Ser-266 and Ser-274 increases transactivation on the insulin promoter in glucose-stimulated insulinoma cells.

The protein localises to the cytoplasm. Its subcellular location is the nucleus. In terms of biological role, acts as a transcriptional activator: mediates transcriptional activation by binding to E box-containing promoter consensus core sequences 5'-CANNTG-3'. Associates with the p300/CBP transcription coactivator complex to stimulate transcription of the secretin gene as well as the gene encoding the cyclin-dependent kinase inhibitor CDKN1A. Contributes to the regulation of several cell differentiation pathways, like those that promote the formation of early retinal ganglion cells, inner ear sensory neurons, granule cells forming either the cerebellum or the dentate gyrus cell layer of the hippocampus, endocrine islet cells of the pancreas and enteroendocrine cells of the small intestine. Together with PAX6 or SIX3, is required for the regulation of amacrine cell fate specification. Also required for dendrite morphogenesis and maintenance in the cerebellar cortex. Associates with chromatin to enhancer regulatory elements in genes encoding key transcriptional regulators of neurogenesis. The sequence is that of Neurogenic differentiation factor 1 (NEUROD1) from Homo sapiens (Human).